We begin with the raw amino-acid sequence, 437 residues long: Proline--tRNA ligase (437 aa).

It belongs to the class-II aminoacyl-tRNA synthetase family. ProS type 2 subfamily. Homodimer.

The protein resides in the cytoplasm. It catalyses the reaction tRNA(Pro) + L-proline + ATP = L-prolyl-tRNA(Pro) + AMP + diphosphate. Catalyzes the attachment of proline to tRNA(Pro) in a two-step reaction: proline is first activated by ATP to form Pro-AMP and then transferred to the acceptor end of tRNA(Pro). The sequence is that of Proline--tRNA ligase from Acidiphilium cryptum (strain JF-5).